A 273-amino-acid polypeptide reads, in one-letter code: 2,3,4,5-tetrahydropyridine-2,6-dicarboxylate N-succinyltransferase (273 aa).

Residues arginine 104 and aspartate 141 each coordinate substrate.

Belongs to the transferase hexapeptide repeat family. As to quaternary structure, homotrimer.

The protein localises to the cytoplasm. It catalyses the reaction (S)-2,3,4,5-tetrahydrodipicolinate + succinyl-CoA + H2O = (S)-2-succinylamino-6-oxoheptanedioate + CoA. It participates in amino-acid biosynthesis; L-lysine biosynthesis via DAP pathway; LL-2,6-diaminopimelate from (S)-tetrahydrodipicolinate (succinylase route): step 1/3. This chain is 2,3,4,5-tetrahydropyridine-2,6-dicarboxylate N-succinyltransferase, found in Acinetobacter baylyi (strain ATCC 33305 / BD413 / ADP1).